A 426-amino-acid polypeptide reads, in one-letter code: Enolase (426 aa).

Glutamine 162 contributes to the (2R)-2-phosphoglycerate binding site. The active-site Proton donor is the glutamate 204. The Mg(2+) site is built by aspartate 241, glutamate 284, and aspartate 311. Lysine 336, arginine 365, serine 366, and lysine 387 together coordinate (2R)-2-phosphoglycerate. Lysine 336 serves as the catalytic Proton acceptor.

This sequence belongs to the enolase family. Mg(2+) serves as cofactor.

The protein localises to the cytoplasm. It is found in the secreted. Its subcellular location is the cell surface. It carries out the reaction (2R)-2-phosphoglycerate = phosphoenolpyruvate + H2O. It functions in the pathway carbohydrate degradation; glycolysis; pyruvate from D-glyceraldehyde 3-phosphate: step 4/5. Its function is as follows. Catalyzes the reversible conversion of 2-phosphoglycerate (2-PG) into phosphoenolpyruvate (PEP). It is essential for the degradation of carbohydrates via glycolysis. This is Enolase from Acidithiobacillus ferrooxidans (strain ATCC 23270 / DSM 14882 / CIP 104768 / NCIMB 8455) (Ferrobacillus ferrooxidans (strain ATCC 23270)).